A 747-amino-acid polypeptide reads, in one-letter code: Putative T-box protein 31 (747 aa).

Positions 33–199 form a DNA-binding region, T-box; it reads QMLTKRKKTN…AGPAAKKTPD (167 aa). Disordered stretches follow at residues 268–289 and 332–364; these read SLSSPAALKHDSTVSSDSDFDD and SINNPGYLSTASSPAALNQDSSASEKSSIVRDK. Residues 332–358 are compositionally biased toward polar residues; sequence SINNPGYLSTASSPAALNQDSSASEKS.

It is found in the nucleus. In Caenorhabditis elegans, this protein is Putative T-box protein 31 (tbx-31).